Reading from the N-terminus, the 153-residue chain is Protein eva-1 homolog A (153 aa).

Residues 37–57 (ALYFVCGVCLGLVLTLIALVV) form a helical membrane-spanning segment. Positions 66 to 97 (KTQQAPKKTGKTVENTSDTSDSDSDWDNTSDL) are disordered.

It belongs to the EVA1 family.

The protein resides in the endoplasmic reticulum membrane. It localises to the lysosome membrane. Functionally, acts as a regulator of programmed cell death, mediating both autophagy and apoptosis. The sequence is that of Protein eva-1 homolog A (Eva1a) from Danio rerio (Zebrafish).